A 163-amino-acid polypeptide reads, in one-letter code: Choriogonadotropin subunit beta variant 2 (163 aa).

The first 18 residues, 1 to 18, serve as a signal peptide directing secretion; sequence MSKGLLLLLLLSMGGTWA. 6 disulfide bridges follow: Cys27/Cys75, Cys41/Cys90, Cys44/Cys128, Cys52/Cys106, Cys56/Cys108, and Cys111/Cys118. 2 N-linked (GlcNAc...) asparagine glycosylation sites follow: Asn31 and Asn48. Residues 129–163 are disordered; the sequence is DDPRFQASSSSKAPPPSLPSPSRLPGPSDTPILPQ. Residues 141–152 show a composition bias toward pro residues; sequence APPPSLPSPSRL.

The protein belongs to the glycoprotein hormones subunit beta family. As to expression, expressed in placenta, testis and pituitary.

Its subcellular location is the secreted. The sequence is that of Choriogonadotropin subunit beta variant 2 (CGB2) from Homo sapiens (Human).